An 87-amino-acid polypeptide reads, in one-letter code: Large ribosomal subunit protein bL31B (87 aa).

Belongs to the bacterial ribosomal protein bL31 family. Type B subfamily. Part of the 50S ribosomal subunit.

The chain is Large ribosomal subunit protein bL31B from Burkholderia multivorans (strain ATCC 17616 / 249).